A 160-amino-acid chain; its full sequence is Urease accessory protein UreE (160 aa).

Belongs to the UreE family.

The protein resides in the cytoplasm. Involved in urease metallocenter assembly. Binds nickel. Probably functions as a nickel donor during metallocenter assembly. The protein is Urease accessory protein UreE of Acinetobacter baumannii (strain AB307-0294).